The sequence spans 273 residues: Shikimate dehydrogenase (NADP(+)) (273 aa).

Residues 14-16 (SKS) and Thr61 each bind shikimate. The Proton acceptor role is filled by Lys65. The shikimate site is built by Asn86 and Asp102. NADP(+) is bound by residues 126-130 (GAGGA), 150-155 (NRTHAR), and Met213. Tyr215 is a shikimate binding site. Gly237 is a binding site for NADP(+).

Belongs to the shikimate dehydrogenase family. In terms of assembly, homodimer.

The catalysed reaction is shikimate + NADP(+) = 3-dehydroshikimate + NADPH + H(+). It participates in metabolic intermediate biosynthesis; chorismate biosynthesis; chorismate from D-erythrose 4-phosphate and phosphoenolpyruvate: step 4/7. In terms of biological role, involved in the biosynthesis of the chorismate, which leads to the biosynthesis of aromatic amino acids. Catalyzes the reversible NADPH linked reduction of 3-dehydroshikimate (DHSA) to yield shikimate (SA). The sequence is that of Shikimate dehydrogenase (NADP(+)) from Aeromonas hydrophila subsp. hydrophila (strain ATCC 7966 / DSM 30187 / BCRC 13018 / CCUG 14551 / JCM 1027 / KCTC 2358 / NCIMB 9240 / NCTC 8049).